The following is a 266-amino-acid chain: Small ribosomal subunit protein uS2 (266 aa).

The disordered stretch occupies residues 238–266 (EFASAPDAGKKGRQAQPKKGKRASDAAAE). Residues 248-258 (KGRQAQPKKGK) are compositionally biased toward basic residues.

The protein belongs to the universal ribosomal protein uS2 family.

The sequence is that of Small ribosomal subunit protein uS2 from Xylella fastidiosa (strain M12).